Consider the following 472-residue polypeptide: Probable glycine dehydrogenase (decarboxylating) subunit 2 (472 aa).

Residue K268 is modified to N6-(pyridoxal phosphate)lysine.

This sequence belongs to the GcvP family. C-terminal subunit subfamily. As to quaternary structure, the glycine cleavage system is composed of four proteins: P, T, L and H. In this organism, the P 'protein' is a heterodimer of two subunits. The cofactor is pyridoxal 5'-phosphate.

It carries out the reaction N(6)-[(R)-lipoyl]-L-lysyl-[glycine-cleavage complex H protein] + glycine + H(+) = N(6)-[(R)-S(8)-aminomethyldihydrolipoyl]-L-lysyl-[glycine-cleavage complex H protein] + CO2. Its function is as follows. The glycine cleavage system catalyzes the degradation of glycine. The P protein binds the alpha-amino group of glycine through its pyridoxal phosphate cofactor; CO(2) is released and the remaining methylamine moiety is then transferred to the lipoamide cofactor of the H protein. The sequence is that of Probable glycine dehydrogenase (decarboxylating) subunit 2 from Thermoplasma acidophilum (strain ATCC 25905 / DSM 1728 / JCM 9062 / NBRC 15155 / AMRC-C165).